The chain runs to 1070 residues: DNA-directed RNA polymerase subunit beta (1070 aa).

The protein belongs to the RNA polymerase beta chain family. In plastids the minimal PEP RNA polymerase catalytic core is composed of four subunits: alpha, beta, beta', and beta''. When a (nuclear-encoded) sigma factor is associated with the core the holoenzyme is formed, which can initiate transcription.

The protein localises to the plastid. It is found in the chloroplast. The enzyme catalyses RNA(n) + a ribonucleoside 5'-triphosphate = RNA(n+1) + diphosphate. In terms of biological role, DNA-dependent RNA polymerase catalyzes the transcription of DNA into RNA using the four ribonucleoside triphosphates as substrates. The polypeptide is DNA-directed RNA polymerase subunit beta (Silene latifolia (White campion)).